A 561-amino-acid polypeptide reads, in one-letter code: Long-chain-fatty-acid--CoA ligase (561 aa).

213–224 (YTGGTTGVAKGA) contributes to the ATP binding site.

This sequence belongs to the ATP-dependent AMP-binding enzyme family. It depends on Mg(2+) as a cofactor.

Its subcellular location is the membrane. The enzyme catalyses a long-chain fatty acid + ATP + CoA = a long-chain fatty acyl-CoA + AMP + diphosphate. Its pathway is lipid metabolism; fatty acid beta-oxidation. Its function is as follows. Catalyzes the esterification, concomitant with transport, of exogenous long-chain fatty acids into metabolically active CoA thioesters for subsequent degradation or incorporation into phospholipids. This Escherichia coli O6:H1 (strain CFT073 / ATCC 700928 / UPEC) protein is Long-chain-fatty-acid--CoA ligase (fadD).